We begin with the raw amino-acid sequence, 93 residues long: Cell division protein CrgA (93 aa).

2 consecutive transmembrane segments (helical) span residues 31–51 (VWFV…LMVF) and 70–90 (LGPW…LLTM).

Belongs to the CrgA family.

The protein localises to the cell membrane. Functionally, involved in cell division. In Mycobacterium avium (strain 104), this protein is Cell division protein CrgA.